The following is a 154-amino-acid chain: Endoribonuclease YbeY (154 aa).

Zn(2+)-binding residues include histidine 120, histidine 124, and histidine 130.

It belongs to the endoribonuclease YbeY family. Zn(2+) is required as a cofactor.

The protein localises to the cytoplasm. Functionally, single strand-specific metallo-endoribonuclease involved in late-stage 70S ribosome quality control and in maturation of the 3' terminus of the 16S rRNA. The protein is Endoribonuclease YbeY of Leptospira biflexa serovar Patoc (strain Patoc 1 / Ames).